The primary structure comprises 144 residues: Large ribosomal subunit protein uL16 (144 aa).

It belongs to the universal ribosomal protein uL16 family. In terms of assembly, part of the 50S ribosomal subunit.

Functionally, binds 23S rRNA and is also seen to make contacts with the A and possibly P site tRNAs. The sequence is that of Large ribosomal subunit protein uL16 from Listeria innocua serovar 6a (strain ATCC BAA-680 / CLIP 11262).